A 347-amino-acid polypeptide reads, in one-letter code: N-acetyl-gamma-glutamyl-phosphate reductase (347 aa).

Residue Cys-151 is part of the active site.

It belongs to the NAGSA dehydrogenase family. Type 1 subfamily.

It localises to the cytoplasm. The enzyme catalyses N-acetyl-L-glutamate 5-semialdehyde + phosphate + NADP(+) = N-acetyl-L-glutamyl 5-phosphate + NADPH + H(+). It participates in amino-acid biosynthesis; L-arginine biosynthesis; N(2)-acetyl-L-ornithine from L-glutamate: step 3/4. In terms of biological role, catalyzes the NADPH-dependent reduction of N-acetyl-5-glutamyl phosphate to yield N-acetyl-L-glutamate 5-semialdehyde. The protein is N-acetyl-gamma-glutamyl-phosphate reductase of Corynebacterium glutamicum (strain R).